The following is a 382-amino-acid chain: 1-deoxy-D-xylulose 5-phosphate reductoisomerase (382 aa).

NADPH contacts are provided by T10, G11, S12, I13, G36, and N122. K123 contacts 1-deoxy-D-xylulose 5-phosphate. E124 is an NADPH binding site. D148 provides a ligand contact to Mn(2+). 1-deoxy-D-xylulose 5-phosphate-binding residues include S149, E150, S174, and H197. Mn(2+) is bound at residue E150. An NADPH-binding site is contributed by G203. 4 residues coordinate 1-deoxy-D-xylulose 5-phosphate: S210, N215, K216, and E219. Position 219 (E219) interacts with Mn(2+).

The protein belongs to the DXR family. Mg(2+) is required as a cofactor. The cofactor is Mn(2+).

It catalyses the reaction 2-C-methyl-D-erythritol 4-phosphate + NADP(+) = 1-deoxy-D-xylulose 5-phosphate + NADPH + H(+). It functions in the pathway isoprenoid biosynthesis; isopentenyl diphosphate biosynthesis via DXP pathway; isopentenyl diphosphate from 1-deoxy-D-xylulose 5-phosphate: step 1/6. Its function is as follows. Catalyzes the NADPH-dependent rearrangement and reduction of 1-deoxy-D-xylulose-5-phosphate (DXP) to 2-C-methyl-D-erythritol 4-phosphate (MEP). The protein is 1-deoxy-D-xylulose 5-phosphate reductoisomerase of Chlorobium limicola (strain DSM 245 / NBRC 103803 / 6330).